The sequence spans 626 residues: Janus kinase and microtubule-interacting protein 1 (626 aa).

The interval 1–25 is disordered; that stretch reads MSKKGRSKGEKPETETDSVQMANEE. Residues 1–365 are mediates association with microtubules; the sequence is MSKKGRSKGE…KLKSLTRENV (365 aa). Coiled-coil stretches lie at residues 13-255 and 284-413; these read ETET…EAER and ERDV…DDLS. Residues 365-626 form a mediates interaction with TYK2 and GABBR1 region; that stretch reads VEMKEKLSAQ…ILFEPKLKFV (262 aa). Ser-382 carries the phosphoserine modification. The segment covering 452–461 has biased composition (polar residues); that stretch reads ETLSETSYNT. The disordered stretch occupies residues 452–481; it reads ETLSETSYNTDRTDRTPATPEEDLDETTTR. Thr-470 carries the phosphothreonine modification. Positions 490–604 form a coiled coil; sequence QLTREYQALQ…EFRVLELEVR (115 aa).

It belongs to the JAKMIP family. Homodimer. Interacts with JAK1 and TYK2. Forms a complex with GABBR1 and KIF5B/kinesin-1. In terms of processing, phosphorylated. In terms of tissue distribution, specifically expressed in brain and testis by spermatogonia, spermatocytes, spermatozoa and Sertoli cells (at protein level).

Its subcellular location is the cytoplasm. The protein resides in the cytoskeleton. It is found in the membrane. In terms of biological role, associates with microtubules and may play a role in the microtubule-dependent transport of the GABA-B receptor. May play a role in JAK1 signaling and regulate microtubule cytoskeleton rearrangements. The protein is Janus kinase and microtubule-interacting protein 1 (Jakmip1) of Rattus norvegicus (Rat).